The sequence spans 475 residues: Glutamate--tRNA ligase 2 (475 aa).

Positions 9–19 match the 'HIGH' region motif; that stretch reads PSPTGFLHIGS. Positions 238–242 match the 'KMSKS' region motif; the sequence is KLSKR. K241 contributes to the ATP binding site.

This sequence belongs to the class-I aminoacyl-tRNA synthetase family. Glutamate--tRNA ligase type 1 subfamily. In terms of assembly, monomer.

Its subcellular location is the cytoplasm. It catalyses the reaction tRNA(Glu) + L-glutamate + ATP = L-glutamyl-tRNA(Glu) + AMP + diphosphate. Functionally, catalyzes the attachment of glutamate to tRNA(Glu) in a two-step reaction: glutamate is first activated by ATP to form Glu-AMP and then transferred to the acceptor end of tRNA(Glu). In Bartonella quintana (strain Toulouse) (Rochalimaea quintana), this protein is Glutamate--tRNA ligase 2.